We begin with the raw amino-acid sequence, 401 residues long: MEKKKVVLAYSGGLDTSVAIKWLQEKNYDIIALCLDLGEGKDLAFVKEKALSVGAIKSYMIDVQEEFANEYALMAMQAHTLYEGKYPLVSALSRPLIAKKLVEIAEQEGATAVAHGCTGKGNDQVRFEVSIQALNPYLEVIAPVREWKWSREEEIAYAKENNVPIPINLDSPFSIDQNLWGRSNECGILEDPWAAPPEDAYEMTLALEDTPNKPEFVEIGFEAGVPTTLNGTAYPLSELIKTLNALAGKHGVGRIDHVENRLVGIKSREVYECPAAMTLITAHKELEDLTLVKEVAHFKPMIEQKITELIYNGLWFSPLKQALHAFLQETQKNVTGMVRVKLFKGHAIVEGRKSEYSLYDEKLATYTAQDEFNHDAAVGFISLFGLPTKVYSQVNQKKVEA.

9–17 (AYSGGLDTS) contributes to the ATP binding site. Residue Tyr86 coordinates L-citrulline. Gly116 lines the ATP pocket. The L-aspartate site is built by Thr118, Asn122, and Asp123. An L-citrulline-binding site is contributed by Asn122. Residues Arg126, Ser174, Ser183, Glu259, and Tyr271 each coordinate L-citrulline.

Belongs to the argininosuccinate synthase family. Type 1 subfamily. In terms of assembly, homotetramer.

It localises to the cytoplasm. It catalyses the reaction L-citrulline + L-aspartate + ATP = 2-(N(omega)-L-arginino)succinate + AMP + diphosphate + H(+). Its pathway is amino-acid biosynthesis; L-arginine biosynthesis; L-arginine from L-ornithine and carbamoyl phosphate: step 2/3. This is Argininosuccinate synthase from Bacillus cereus (strain AH820).